The chain runs to 81 residues: MKTLLLTLVVVTIVCLDLGYTLKCNKLPPIASKTCPAGKNLCYKMFMMSDLTIPVKRGCIDVCPKNSLLVKYVCCNTDRCN.

A signal peptide spans 1–21 (MKTLLLTLVVVTIVCLDLGYT). 4 disulfides stabilise this stretch: Cys-24-Cys-42, Cys-35-Cys-59, Cys-63-Cys-74, and Cys-75-Cys-80.

This sequence belongs to the three-finger toxin family. Short-chain subfamily. Type IA cytotoxin sub-subfamily. Monomer in solution; Homodimer and oligomer in the presence of negatively charged lipids forming a pore with a size ranging between 20 and 30 Angstroms. As to expression, expressed by the venom gland.

Its subcellular location is the secreted. The protein resides in the target cell membrane. Its function is as follows. Shows cytolytic activity on many different cells by forming pore in lipid membranes. In vivo, increases heart rate or kills the animal by cardiac arrest. In addition, it binds to heparin with high affinity, interacts with Kv channel-interacting protein 1 (KCNIP1) in a calcium-independent manner, and binds to integrin alpha-V/beta-3 (ITGAV/ITGB3) with moderate affinity. This Naja atra (Chinese cobra) protein is Cytotoxin 1a.